A 353-amino-acid polypeptide reads, in one-letter code: Rhodopsin (353 aa).

The Extracellular portion of the chain corresponds to 1-36 (MNGTEGPYFYIPMVNTTGIVRSPYEYPQYYLVNPAA). N-linked (GlcNAc...) asparagine glycosylation is found at Asn-2 and Asn-15. Residues 37–61 (YAALGAYMFLLILVGFPINFLTLYV) traverse the membrane as a helical segment. At 62 to 73 (TIEHKKLRTPLN) the chain is on the cytoplasmic side. A helical transmembrane segment spans residues 74-96 (YILLNLAVANLFMVFGGFTTTMY). The Extracellular portion of the chain corresponds to 97-110 (TSMHGYFVLGRLGC). An intrachain disulfide couples Cys-110 to Cys-187. A helical transmembrane segment spans residues 111–133 (NLEGFFATLGGEIALWSLVVLAI). The 'Ionic lock' involved in activated form stabilization signature appears at 134–136 (ERW). Residues 134–152 (ERWMVVCKPISNFRFGEDH) lie on the Cytoplasmic side of the membrane. The chain crosses the membrane as a helical span at residues 153 to 173 (AIMGLAFTWVMAAACAVPPLV). Topologically, residues 174-202 (GWSRYIPEGMQCSCGIDYYTRAEGFNNES) are extracellular. N-linked (GlcNAc...) asparagine glycosylation is present at Asn-200. A helical transmembrane segment spans residues 203-224 (FVIYMFVCHFLIPLVVVFFCYG). The Cytoplasmic segment spans residues 225-252 (RLLCAVKEAAAAQQESETTQRAEREVSR). A helical membrane pass occupies residues 253-274 (MVVIMVVAFLICWCPYAGVAWY). The Extracellular portion of the chain corresponds to 275-286 (IFTHQGSEFGPL). The chain crosses the membrane as a helical span at residues 287–308 (FMTFPAFFAKSSSIYNPMIYIC). N6-(retinylidene)lysine is present on Lys-296. Over 309-353 (MNKQFRHCMITTLCCGKNPFEEEEGASTTSKTEASSVSSSSVSPA) the chain is Cytoplasmic. Residues Cys-322 and Cys-323 are each lipidated (S-palmitoyl cysteine). The disordered stretch occupies residues 330–353 (EEEGASTTSKTEASSVSSSSVSPA). Low complexity predominate over residues 334–353 (ASTTSKTEASSVSSSSVSPA).

Belongs to the G-protein coupled receptor 1 family. Opsin subfamily. In terms of processing, phosphorylated on some or all of the serine and threonine residues present in the C-terminal region. Post-translationally, contains one covalently linked retinal chromophore.

It is found in the membrane. It localises to the cell projection. Its subcellular location is the cilium. The protein resides in the photoreceptor outer segment. Its function is as follows. Photoreceptor required for image-forming vision at low light intensity. While most salt water fish species use retinal as chromophore, most freshwater fish use 3-dehydroretinal, or a mixture of retinal and 3-dehydroretinal. Light-induced isomerization of 11-cis to all-trans retinal triggers a conformational change that activates signaling via G-proteins. Subsequent receptor phosphorylation mediates displacement of the bound G-protein alpha subunit by arrestin and terminates signaling. The protein is Rhodopsin (rho) of Chelon saliens (Leaping mullet).